A 164-amino-acid chain; its full sequence is Nucleotide-binding protein Acid345_2028 (164 aa).

Belongs to the YajQ family.

Nucleotide-binding protein. This Koribacter versatilis (strain Ellin345) protein is Nucleotide-binding protein Acid345_2028.